A 186-amino-acid chain; its full sequence is dCTP deaminase (186 aa).

Position 107–112 (107–112 (KSTYAR)) interacts with dCTP. Glutamate 133 (proton donor/acceptor) is an active-site residue. The dCTP site is built by glutamine 152, tyrosine 166, and glutamine 176.

This sequence belongs to the dCTP deaminase family. Homotrimer.

It catalyses the reaction dCTP + H2O + H(+) = dUTP + NH4(+). It functions in the pathway pyrimidine metabolism; dUMP biosynthesis; dUMP from dCTP (dUTP route): step 1/2. In terms of biological role, catalyzes the deamination of dCTP to dUTP. The sequence is that of dCTP deaminase from Campylobacter jejuni subsp. jejuni serotype O:2 (strain ATCC 700819 / NCTC 11168).